Consider the following 257-residue polypeptide: V-type proton ATPase subunit D (257 aa).

A disordered region spans residues 215–257; that stretch reads KEQEAAQKALEGPGPGEDAAHSENNPPRNLLASEEDNLPVLFN.

Belongs to the V-ATPase D subunit family. In terms of assembly, V-ATPase is a heteromultimeric enzyme made up of two complexes: the ATP-hydrolytic V1 complex and the proton translocation V0 complex. The V1 complex consists of three catalytic AB heterodimers that form a heterohexamer, three peripheral stalks each consisting of EG heterodimers, one central rotor including subunits D and F, and the regulatory subunits C and H. The proton translocation complex V0 consists of the proton transport subunit a, a ring of proteolipid subunits c9c'', rotary subunit d, subunits e and f, and the accessory subunits vah-19/Ac45 and vah-20/PRR.

Subunit of the V1 complex of vacuolar(H+)-ATPase (V-ATPase), a multisubunit enzyme composed of a peripheral complex (V1) that hydrolyzes ATP and a membrane integral complex (V0) that translocates protons. V-ATPase is responsible for acidifying and maintaining the pH of intracellular compartments and in some cell types, is targeted to the plasma membrane, where it is responsible for acidifying the extracellular environment. The polypeptide is V-type proton ATPase subunit D (Caenorhabditis elegans).